A 471-amino-acid chain; its full sequence is Tryptophanase (471 aa).

Position 256 is an N6-(pyridoxal phosphate)lysine (Lys256).

Belongs to the beta-eliminating lyase family. In terms of assembly, homotetramer. The cofactor is pyridoxal 5'-phosphate.

It catalyses the reaction L-tryptophan + H2O = indole + pyruvate + NH4(+). It functions in the pathway amino-acid degradation; L-tryptophan degradation via pyruvate pathway; indole and pyruvate from L-tryptophan: step 1/1. The polypeptide is Tryptophanase (Salinibacter ruber (strain DSM 13855 / M31)).